The primary structure comprises 149 residues: Nucleoside diphosphate kinase (149 aa).

Residues K9, F57, R85, T91, R102, and N112 each contribute to the ATP site. The Pros-phosphohistidine intermediate role is filled by H115.

This sequence belongs to the NDK family. As to quaternary structure, homotetramer. Mg(2+) is required as a cofactor.

It localises to the cytoplasm. The catalysed reaction is a 2'-deoxyribonucleoside 5'-diphosphate + ATP = a 2'-deoxyribonucleoside 5'-triphosphate + ADP. It carries out the reaction a ribonucleoside 5'-diphosphate + ATP = a ribonucleoside 5'-triphosphate + ADP. Major role in the synthesis of nucleoside triphosphates other than ATP. The ATP gamma phosphate is transferred to the NDP beta phosphate via a ping-pong mechanism, using a phosphorylated active-site intermediate. In Thermomicrobium roseum (strain ATCC 27502 / DSM 5159 / P-2), this protein is Nucleoside diphosphate kinase.